The sequence spans 80 residues: Keratin-associated protein 6-1 (80 aa).

This sequence belongs to the KRTAP type 6 family. Interacts with hair keratins.

In the hair cortex, hair keratin intermediate filaments are embedded in an interfilamentous matrix, consisting of hair keratin-associated proteins (KRTAP), which are essential for the formation of a rigid and resistant hair shaft through their extensive disulfide bond cross-linking with abundant cysteine residues of hair keratins. The matrix proteins include the high-sulfur and high-glycine-tyrosine keratins. In Oryctolagus cuniculus (Rabbit), this protein is Keratin-associated protein 6-1 (KRTAP6-1).